Reading from the N-terminus, the 661-residue chain is Pumilio domain-containing protein C56F2.08c (661 aa).

The region spanning 1 to 74 (MLYVSNLPVG…GPVQVMLAKP (74 aa)) is the RRM domain. Phosphoserine is present on serine 102. Threonine 104 is subject to Phosphothreonine. Serine 105 carries the phosphoserine modification. The region spanning 129–482 (INLDIVDSMI…RLMEEVGMTS (354 aa)) is the PUM-HD domain. 4 Pumilio repeats span residues 191 to 226 (SMLD…AMLE), 227 to 263 (RIAP…LIVK), 264 to 302 (HLRP…VMAR), and 374 to 410 (HLAT…LLLK). Phosphoserine occurs at positions 482, 486, 488, and 490.

The protein resides in the cytoplasm. This chain is Pumilio domain-containing protein C56F2.08c, found in Schizosaccharomyces pombe (strain 972 / ATCC 24843) (Fission yeast).